A 258-amino-acid chain; its full sequence is Type III pantothenate kinase (258 aa).

6 to 13 is a binding site for ATP; it reads DVGNTNIV. Substrate contacts are provided by residues Tyr100 and 107–110; that span reads GADR. Asp109 serves as the catalytic Proton acceptor. Asp129 contributes to the K(+) binding site. Thr132 lines the ATP pocket. Thr184 is a binding site for substrate.

It belongs to the type III pantothenate kinase family. Homodimer. The cofactor is NH4(+). K(+) is required as a cofactor.

The protein localises to the cytoplasm. It carries out the reaction (R)-pantothenate + ATP = (R)-4'-phosphopantothenate + ADP + H(+). It functions in the pathway cofactor biosynthesis; coenzyme A biosynthesis; CoA from (R)-pantothenate: step 1/5. Functionally, catalyzes the phosphorylation of pantothenate (Pan), the first step in CoA biosynthesis. This Clostridium botulinum (strain Loch Maree / Type A3) protein is Type III pantothenate kinase.